The chain runs to 238 residues: Photosynthetic NDH subunit of lumenal location 1, chloroplastic (238 aa).

The protein belongs to the PsbP family. Part of the chloroplast NDH complex, composed of a mixture of chloroplast and nucleus encoded subunits. Component of the NDH lumenal subcomplex, at least composed of PnsL1, PnsL2, PnsL3, PnsL4 and PnsL5.

It localises to the plastid. The protein localises to the chloroplast thylakoid membrane. In terms of biological role, NDH shuttles electrons from NAD(P)H:plastoquinone, via FMN and iron-sulfur (Fe-S) centers, to quinones in the photosynthetic chain and possibly in a chloroplast respiratory chain. The immediate electron acceptor for the enzyme in this species is believed to be plastoquinone. Couples the redox reaction to proton translocation, and thus conserves the redox energy in a proton gradient. Required for accumulation of the chloroplast NAD(P)H dehydrogenase (NDH) complex. The protein is Photosynthetic NDH subunit of lumenal location 1, chloroplastic of Arabidopsis thaliana (Mouse-ear cress).